Consider the following 207-residue polypeptide: Ribosomal RNA small subunit methyltransferase G (207 aa).

S-adenosyl-L-methionine contacts are provided by residues G75, F80, 126 to 127, and R140; that span reads LE.

Belongs to the methyltransferase superfamily. RNA methyltransferase RsmG family.

The protein resides in the cytoplasm. It carries out the reaction guanosine(527) in 16S rRNA + S-adenosyl-L-methionine = N(7)-methylguanosine(527) in 16S rRNA + S-adenosyl-L-homocysteine. Specifically methylates the N7 position of guanine in position 527 of 16S rRNA. This Erythrobacter litoralis (strain HTCC2594) protein is Ribosomal RNA small subunit methyltransferase G.